Here is a 1265-residue protein sequence, read N- to C-terminus: Protein diaphanous homolog 1 (1265 aa).

The residue at position 1 (M1) is an N-acetylmethionine. Positions 1–12 (MEPSGGGLGPGR) are enriched in gly residues. Disordered stretches follow at residues 1–42 (MEPS…FTLK) and 54–83 (SMRI…TAQS). Phosphoserine is present on S22. The span at 54–65 (SMRIKKEKEKPN) shows a compositional bias: basic and acidic residues. The segment covering 67–83 (AHRNSSASYGDDPTAQS) has biased composition (polar residues). One can recognise a GBD/FH3 domain in the interval 84–449 (LQDISDDQVL…QIVLHKNGTD (366 aa)). A coiled-coil region spans residues 474 to 568 (VEKSEAKATE…KKEMASLSAV (95 aa)). The segment at 573-742 (SVSSSAAVPQ…PPPPGMGVPP (170 aa)) is disordered. 2 stretches are compositionally biased toward pro residues: residues 594-628 (IPPP…PPLP) and 645-742 (IPPP…GVPP). The 133-residue stretch at 625-757 (PPLPGGACIS…FGIPAAPVLP (133 aa)) folds into the FH1 domain. Position 761 is a phosphothreonine (T761). The FH2 domain occupies 762–1164 (PKKVYKPEVQ…MRRAKLAKEK (403 aa)). K1050 and K1096 each carry N6-acetyllysine. Y1114 bears the Phosphotyrosine mark. Residues 1141–1185 (AVKENQKRRETEEKMRRAKLAKEKAEKERLEKQQKREQLIDMNAE) adopt a coiled-coil conformation. A DAD domain is found at 1187–1215 (DETGVMDSLLEALQSGAAFRRKRGPRQVN). Position 1247 is a phosphoserine (S1247).

Belongs to the formin homology family. Diaphanous subfamily. As to quaternary structure, homodimer. Interacts with the GTP-bound form of RHOA. Interacts with RHOC, PFY1, MAPRE1, BAIAP2 and APC. Interacts with SCAI. Interacts with DCAF7, via FH2 domain. Interacts with NCDN. Interacts with OSBPL10, OSBPL2, VIM, TUBB and DYN1. Post-translationally, phosphorylation at Thr-761 is stimulated by cAMP and regulates stability, complex formation and mitochondrial movement. In terms of tissue distribution, expressed in testis. Present in Sertoli cells (at protein level).

It localises to the cell membrane. The protein localises to the cell projection. It is found in the ruffle membrane. The protein resides in the cytoplasm. Its subcellular location is the cytoskeleton. It localises to the microtubule organizing center. The protein localises to the centrosome. It is found in the spindle. The protein resides in the nucleus. In terms of biological role, actin nucleation and elongation factor required for the assembly of F-actin structures, such as actin cables and stress fibers. Binds to the barbed end of the actin filament and slows down actin polymerization and depolymerization. Required for cytokinesis, and transcriptional activation of the serum response factor. DFR proteins couple Rho and Src tyrosine kinase during signaling and the regulation of actin dynamics. Functions as a scaffold protein for MAPRE1 and APC to stabilize microtubules and promote cell migration. Has neurite outgrowth promoting activity. Acts in a Rho-dependent manner to recruit PFY1 to the membrane. The MEMO1-RHOA-DIAPH1 signaling pathway plays an important role in ERBB2-dependent stabilization of microtubules at the cell cortex. It controls the localization of APC and CLASP2 to the cell membrane, via the regulation of GSK3B activity. In turn, membrane-bound APC allows the localization of the MACF1 to the cell membrane, which is required for microtubule capture and stabilization. Plays a role in the regulation of cell morphology and cytoskeletal organization. Required in the control of cell shape. Also acts as an actin nucleation and elongation factor in the nucleus by promoting nuclear actin polymerization inside the nucleus to drive serum-dependent SRF-MRTFA activity. This is Protein diaphanous homolog 1 from Rattus norvegicus (Rat).